The following is a 51-amino-acid chain: UPF0391 membrane protein Mbur_2216 (51 aa).

2 helical membrane passes run 1–21 (MADL…AYVL) and 31–51 (MTIA…TILL).

It belongs to the UPF0391 family.

The protein resides in the cell membrane. The protein is UPF0391 membrane protein Mbur_2216 of Methanococcoides burtonii (strain DSM 6242 / NBRC 107633 / OCM 468 / ACE-M).